Here is a 366-residue protein sequence, read N- to C-terminus: tRNA N6-adenosine threonylcarbamoyltransferase (366 aa).

The a divalent metal cation site is built by H130, H134, and Y151. Substrate is bound by residues 151-155 (YVSGG), D183, G198, E202, and N297. D325 is a binding site for a divalent metal cation.

Belongs to the KAE1 / TsaD family. As to quaternary structure, component of the EKC/KEOPS complex composed of at least BUD32, CGI121, GON7, KAE1 and PCC1; the whole complex dimerizes. A divalent metal cation serves as cofactor.

It is found in the cytoplasm. It localises to the nucleus. The enzyme catalyses L-threonylcarbamoyladenylate + adenosine(37) in tRNA = N(6)-L-threonylcarbamoyladenosine(37) in tRNA + AMP + H(+). In terms of biological role, component of the EKC/KEOPS complex that is required for the formation of a threonylcarbamoyl group on adenosine at position 37 (t(6)A37) in tRNAs that read codons beginning with adenine. The complex is probably involved in the transfer of the threonylcarbamoyl moiety of threonylcarbamoyl-AMP (TC-AMP) to the N6 group of A37. KAE1 likely plays a direct catalytic role in this reaction, but requires other protein(s) of the complex to fulfill this activity. The EKC/KEOPS complex also promotes both telomere uncapping and telomere elongation. The complex is required for efficient recruitment of transcriptional coactivators. The sequence is that of tRNA N6-adenosine threonylcarbamoyltransferase from Cryptococcus neoformans var. neoformans serotype D (strain JEC21 / ATCC MYA-565) (Filobasidiella neoformans).